A 260-amino-acid chain; its full sequence is 5'-nucleotidase SurE (260 aa).

The a divalent metal cation site is built by Asp-10, Asp-11, Ser-41, and Asn-95.

Belongs to the SurE nucleotidase family. Requires a divalent metal cation as cofactor.

Its subcellular location is the cytoplasm. The catalysed reaction is a ribonucleoside 5'-phosphate + H2O = a ribonucleoside + phosphate. In terms of biological role, nucleotidase that shows phosphatase activity on nucleoside 5'-monophosphates. The chain is 5'-nucleotidase SurE from Methanoregula boonei (strain DSM 21154 / JCM 14090 / 6A8).